The following is a 436-amino-acid chain: 3-oxo-tetronate kinase (436 aa).

Residues Ser272, 372-375, and Gly415 contribute to the ATP site; that span reads GGET.

It belongs to the four-carbon acid sugar kinase family.

The enzyme catalyses 3-dehydro-L-erythronate + ATP = 3-dehydro-4-O-phospho-L-erythronate + ADP + H(+). It carries out the reaction 3-dehydro-D-erythronate + ATP = 3-dehydro-4-O-phospho-D-erythronate + ADP + H(+). Catalyzes the ATP-dependent phosphorylation of 3-oxo-tetronate to 3-oxo-tetronate 4-phosphate. The protein is 3-oxo-tetronate kinase of Brucella melitensis biotype 1 (strain ATCC 23456 / CCUG 17765 / NCTC 10094 / 16M).